Consider the following 419-residue polypeptide: Imidazolonepropionase (419 aa).

The Fe(3+) site is built by His84 and His86. Zn(2+) contacts are provided by His84 and His86. Residues Arg93, Tyr156, and His189 each coordinate 4-imidazolone-5-propanoate. Tyr156 contributes to the N-formimidoyl-L-glutamate binding site. His254 contributes to the Fe(3+) binding site. His254 serves as a coordination point for Zn(2+). Gln257 is a binding site for 4-imidazolone-5-propanoate. Fe(3+) is bound at residue Asp329. Position 329 (Asp329) interacts with Zn(2+). Asn331 and Gly333 together coordinate N-formimidoyl-L-glutamate. Thr334 is a binding site for 4-imidazolone-5-propanoate.

This sequence belongs to the metallo-dependent hydrolases superfamily. HutI family. In terms of assembly, monomer. Forms a tightly packed homodimer in the crystal, but this seems to be an artifact of crystallization. Zn(2+) serves as cofactor. It depends on Fe(3+) as a cofactor.

The protein resides in the cytoplasm. It catalyses the reaction 4-imidazolone-5-propanoate + H2O = N-formimidoyl-L-glutamate. Its pathway is amino-acid degradation; L-histidine degradation into L-glutamate; N-formimidoyl-L-glutamate from L-histidine: step 3/3. Catalyzes the hydrolytic cleavage of the carbon-nitrogen bond in imidazolone-5-propanoate to yield N-formimidoyl-L-glutamate. It is the third step in the universal histidine degradation pathway. The sequence is that of Imidazolonepropionase from Agrobacterium fabrum (strain C58 / ATCC 33970) (Agrobacterium tumefaciens (strain C58)).